The chain runs to 515 residues: Maturase K (515 aa).

Belongs to the intron maturase 2 family. MatK subfamily.

The protein resides in the plastid. The protein localises to the chloroplast. Its function is as follows. Usually encoded in the trnK tRNA gene intron. Probably assists in splicing its own and other chloroplast group II introns. In Pinus roxburghii (Chir pine), this protein is Maturase K.